A 124-amino-acid polypeptide reads, in one-letter code: Small ribosomal subunit protein uS12 (124 aa).

Position 89 is a 3-methylthioaspartic acid (Asp89).

It belongs to the universal ribosomal protein uS12 family. In terms of assembly, part of the 30S ribosomal subunit. Contacts proteins S8 and S17. May interact with IF1 in the 30S initiation complex.

Its function is as follows. With S4 and S5 plays an important role in translational accuracy. Interacts with and stabilizes bases of the 16S rRNA that are involved in tRNA selection in the A site and with the mRNA backbone. Located at the interface of the 30S and 50S subunits, it traverses the body of the 30S subunit contacting proteins on the other side and probably holding the rRNA structure together. The combined cluster of proteins S8, S12 and S17 appears to hold together the shoulder and platform of the 30S subunit. The chain is Small ribosomal subunit protein uS12 from Haemophilus ducreyi (strain 35000HP / ATCC 700724).